The following is a 363-amino-acid chain: Aspartate-semialdehyde dehydrogenase (363 aa).

NADP(+) contacts are provided by threonine 15, glycine 16, serine 17, valine 18, serine 40, serine 43, and leucine 87. Cysteine 154 serves as the catalytic Acyl-thioester intermediate. Residue glycine 186 coordinates NADP(+). Histidine 251 serves as the catalytic Proton acceptor. Asparagine 341 is an NADP(+) binding site.

It belongs to the aspartate-semialdehyde dehydrogenase family. As to quaternary structure, homotetramer; dimer of dimers.

Its subcellular location is the cytoplasm. The protein resides in the cytosol. The protein localises to the nucleus. The catalysed reaction is L-aspartate 4-semialdehyde + phosphate + NADP(+) = 4-phospho-L-aspartate + NADPH + H(+). It participates in amino-acid biosynthesis; L-methionine biosynthesis via de novo pathway; L-homoserine from L-aspartate: step 2/3. It functions in the pathway amino-acid biosynthesis; L-threonine biosynthesis; L-threonine from L-aspartate: step 2/5. With respect to regulation, inhibited by 4-amino-3-hydroxynaphthalene-1-sulfonic acid and the competitive inhibitor 1,4-benzoquinone and derivates such as 2-chloro-3-methoxy-1,4-naphthoquinone, 2,3-dichloro-1,4-naphthoquinone, 2-chloro-1,4-naphthoquinone, 2-bromo-1,4-naphthoquinone and 2,3-dichloro-5,8-dihydroxy-1,4-naphthoquinone. Its function is as follows. Catalyzes the NADPH-dependent formation of L-aspartate 4-semialdehyde (L-ASA) by the reductive dephosphorylation of 4-phospho-L-aspartate. Mediates the second step in the biosynthesis of amino acids that derive from aspartate (the aspartate family of amino acids), including methioinine and threonine, the latter of which is a precursor to isoleucine. This Aspergillus fumigatus (strain ATCC MYA-4609 / CBS 101355 / FGSC A1100 / Af293) (Neosartorya fumigata) protein is Aspartate-semialdehyde dehydrogenase.